A 666-amino-acid polypeptide reads, in one-letter code: Fructose-1,6-bisphosphatase class 3 (666 aa).

This sequence belongs to the FBPase class 3 family. It depends on Mn(2+) as a cofactor.

The enzyme catalyses beta-D-fructose 1,6-bisphosphate + H2O = beta-D-fructose 6-phosphate + phosphate. It participates in carbohydrate biosynthesis; gluconeogenesis. This chain is Fructose-1,6-bisphosphatase class 3, found in Phocaeicola vulgatus (strain ATCC 8482 / DSM 1447 / JCM 5826 / CCUG 4940 / NBRC 14291 / NCTC 11154) (Bacteroides vulgatus).